Here is a 790-residue protein sequence, read N- to C-terminus: Penicillin-binding protein 1A (790 aa).

At 1–6 the chain is on the cytoplasmic side; that stretch reads MYKSLL. Residues 7 to 27 traverse the membrane as a helical; Signal-anchor for type II membrane protein segment; that stretch reads FCLKIFVFLILVGCGITAYII. Residues 28–790 lie on the Periplasmic side of the membrane; that stretch reads YHYSRDLPDY…SKEDQSQEIY (763 aa). A transglycosylase region spans residues 49-220; that stretch reads TRIYSRDGKL…SELNPERNYA (172 aa). Glu-87 acts as the Proton donor; for transglycosylase activity in catalysis. The interval 398–711 is transpeptidase; it reads DVIVVEAIKE…SNVVLPIFID (314 aa). Residue Ser-457 is the Acyl-ester intermediate; for transpeptidase activity of the active site.

The protein in the N-terminal section; belongs to the glycosyltransferase 51 family. This sequence in the C-terminal section; belongs to the transpeptidase family.

It localises to the cell inner membrane. It carries out the reaction [GlcNAc-(1-&gt;4)-Mur2Ac(oyl-L-Ala-gamma-D-Glu-L-Lys-D-Ala-D-Ala)](n)-di-trans,octa-cis-undecaprenyl diphosphate + beta-D-GlcNAc-(1-&gt;4)-Mur2Ac(oyl-L-Ala-gamma-D-Glu-L-Lys-D-Ala-D-Ala)-di-trans,octa-cis-undecaprenyl diphosphate = [GlcNAc-(1-&gt;4)-Mur2Ac(oyl-L-Ala-gamma-D-Glu-L-Lys-D-Ala-D-Ala)](n+1)-di-trans,octa-cis-undecaprenyl diphosphate + di-trans,octa-cis-undecaprenyl diphosphate + H(+). The enzyme catalyses Preferential cleavage: (Ac)2-L-Lys-D-Ala-|-D-Ala. Also transpeptidation of peptidyl-alanyl moieties that are N-acyl substituents of D-alanine.. It participates in cell wall biogenesis; peptidoglycan biosynthesis. Functionally, cell wall formation. Synthesis of cross-linked peptidoglycan from the lipid intermediates. The enzyme has a penicillin-insensitive transglycosylase N-terminal domain (formation of linear glycan strands) and a penicillin-sensitive transpeptidase C-terminal domain (cross-linking of the peptide subunits). This is Penicillin-binding protein 1A (mrcA) from Rickettsia conorii (strain ATCC VR-613 / Malish 7).